A 172-amino-acid chain; its full sequence is MDRAQKQESIESLKSVFADAGAVVVTHYMGLTVAEMTDLRLRLRKEGAAIKVVKNTLALKALDGKLGDKGDKLFTGPVAIAYGPDAVSAAKIAVQFAKENDKLKIVGGVLDQTNVLDEAGVRALATLPSLDELRGKLIGLIQAPATKIAGVLQAPAAQLARVFNAYATKDAA.

This sequence belongs to the universal ribosomal protein uL10 family. In terms of assembly, part of the ribosomal stalk of the 50S ribosomal subunit. The N-terminus interacts with L11 and the large rRNA to form the base of the stalk. The C-terminus forms an elongated spine to which L12 dimers bind in a sequential fashion forming a multimeric L10(L12)X complex.

Forms part of the ribosomal stalk, playing a central role in the interaction of the ribosome with GTP-bound translation factors. In Caulobacter vibrioides (strain ATCC 19089 / CIP 103742 / CB 15) (Caulobacter crescentus), this protein is Large ribosomal subunit protein uL10 (rplJ).